Here is a 275-residue protein sequence, read N- to C-terminus: Formamidopyrimidine-DNA glycosylase (275 aa).

Pro-2 serves as the catalytic Schiff-base intermediate with DNA. The Proton donor role is filled by Glu-3. Lys-58 acts as the Proton donor; for beta-elimination activity in catalysis. The DNA site is built by His-91, Arg-109, and Arg-154. The FPG-type zinc-finger motif lies at 240-274; sequence AVYERAGLPCRVCGTPIRRLVQGQRATYYCPSCQK. The active-site Proton donor; for delta-elimination activity is the Arg-264.

This sequence belongs to the FPG family. In terms of assembly, monomer. Zn(2+) serves as cofactor.

The enzyme catalyses Hydrolysis of DNA containing ring-opened 7-methylguanine residues, releasing 2,6-diamino-4-hydroxy-5-(N-methyl)formamidopyrimidine.. It catalyses the reaction 2'-deoxyribonucleotide-(2'-deoxyribose 5'-phosphate)-2'-deoxyribonucleotide-DNA = a 3'-end 2'-deoxyribonucleotide-(2,3-dehydro-2,3-deoxyribose 5'-phosphate)-DNA + a 5'-end 5'-phospho-2'-deoxyribonucleoside-DNA + H(+). Involved in base excision repair of DNA damaged by oxidation or by mutagenic agents. Acts as a DNA glycosylase that recognizes and removes damaged bases. Has a preference for oxidized purines, such as 7,8-dihydro-8-oxoguanine (8-oxoG). Has AP (apurinic/apyrimidinic) lyase activity and introduces nicks in the DNA strand. Cleaves the DNA backbone by beta-delta elimination to generate a single-strand break at the site of the removed base with both 3'- and 5'-phosphates. The chain is Formamidopyrimidine-DNA glycosylase from Bordetella petrii (strain ATCC BAA-461 / DSM 12804 / CCUG 43448).